Here is a 1150-residue protein sequence, read N- to C-terminus: Protogenin (1150 aa).

The signal sequence occupies residues Met1–Cys35. 4 consecutive Ig-like domains span residues Phe36 to Ala130, Ser135 to Thr222, Pro235 to Thr322, and Pro327 to Thr411. The Extracellular portion of the chain corresponds to Phe36 to Thr949. 4 disulfide bridges follow: Cys60–Cys113, Cys156–Cys205, Cys256–Cys304, and Cys348–Cys395. N-linked (GlcNAc...) asparagine glycosylation occurs at Asn90. Fibronectin type-III domains lie at Ala421–Asp515, Pro517–Ala613, Ala618–Arg717, Pro724–Glu817, and Pro822–Lys917. Asn488 is a glycosylation site (N-linked (GlcNAc...) asparagine). Asn630 carries N-linked (GlcNAc...) asparagine glycosylation. Residues Gly950–Ile970 traverse the membrane as a helical segment. The Cytoplasmic portion of the chain corresponds to Tyr971–Leu1150. Disordered stretches follow at residues Ser981–Asn1002 and Ile1086–Leu1150. Polar residues-rich tracts occupy residues Thr983–Ser1000 and Pro1092–Ser1102. Over residues Asp1110–His1138 the composition is skewed to basic and acidic residues. Positions Ser1141–Leu1150 are enriched in polar residues.

This sequence belongs to the immunoglobulin superfamily. DCC family.

It is found in the membrane. Its function is as follows. May play a role in anteroposterior axis elongation. This Homo sapiens (Human) protein is Protogenin.